Here is a 449-residue protein sequence, read N- to C-terminus: UDP-N-acetylmuramoylalanine--D-glutamate ligase (449 aa).

Gly-117–Thr-123 contributes to the ATP binding site.

Belongs to the MurCDEF family.

Its subcellular location is the cytoplasm. The enzyme catalyses UDP-N-acetyl-alpha-D-muramoyl-L-alanine + D-glutamate + ATP = UDP-N-acetyl-alpha-D-muramoyl-L-alanyl-D-glutamate + ADP + phosphate + H(+). The protein operates within cell wall biogenesis; peptidoglycan biosynthesis. Cell wall formation. Catalyzes the addition of glutamate to the nucleotide precursor UDP-N-acetylmuramoyl-L-alanine (UMA). The sequence is that of UDP-N-acetylmuramoylalanine--D-glutamate ligase from Exiguobacterium sibiricum (strain DSM 17290 / CCUG 55495 / CIP 109462 / JCM 13490 / 255-15).